A 313-amino-acid polypeptide reads, in one-letter code: 4-diphosphocytidyl-2-C-methyl-D-erythritol kinase (313 aa).

Lysine 27 is an active-site residue. An ATP-binding site is contributed by 110 to 120 (PIGGGVGGGSS). Residue aspartate 152 is part of the active site.

Belongs to the GHMP kinase family. IspE subfamily.

The catalysed reaction is 4-CDP-2-C-methyl-D-erythritol + ATP = 4-CDP-2-C-methyl-D-erythritol 2-phosphate + ADP + H(+). It functions in the pathway isoprenoid biosynthesis; isopentenyl diphosphate biosynthesis via DXP pathway; isopentenyl diphosphate from 1-deoxy-D-xylulose 5-phosphate: step 3/6. Its function is as follows. Catalyzes the phosphorylation of the position 2 hydroxy group of 4-diphosphocytidyl-2C-methyl-D-erythritol. This is 4-diphosphocytidyl-2-C-methyl-D-erythritol kinase from Histophilus somni (strain 2336) (Haemophilus somnus).